The sequence spans 386 residues: Chaperone protein DnaJ (386 aa).

Residues 5-69 (DLYDVLGVKK…QKRAQYDQFG (65 aa)) form the J domain. The segment at 140-224 (GKETSIKYNR…CHGAGVTEER (85 aa)) adopts a CR-type zinc-finger fold. Residues cysteine 153, cysteine 156, cysteine 170, cysteine 173, cysteine 196, cysteine 199, cysteine 212, and cysteine 215 each contribute to the Zn(2+) site. 4 CXXCXGXG motif repeats span residues 153–160 (CHTCHGSG), 170–177 (CSTCHGQG), 196–203 (CPTCGGKG), and 212–219 (CDTCHGAG).

The protein belongs to the DnaJ family. Homodimer. Zn(2+) is required as a cofactor.

Its subcellular location is the cytoplasm. Functionally, participates actively in the response to hyperosmotic and heat shock by preventing the aggregation of stress-denatured proteins and by disaggregating proteins, also in an autonomous, DnaK-independent fashion. Unfolded proteins bind initially to DnaJ; upon interaction with the DnaJ-bound protein, DnaK hydrolyzes its bound ATP, resulting in the formation of a stable complex. GrpE releases ADP from DnaK; ATP binding to DnaK triggers the release of the substrate protein, thus completing the reaction cycle. Several rounds of ATP-dependent interactions between DnaJ, DnaK and GrpE are required for fully efficient folding. Also involved, together with DnaK and GrpE, in the DNA replication of plasmids through activation of initiation proteins. The polypeptide is Chaperone protein DnaJ (Limosilactobacillus fermentum (strain NBRC 3956 / LMG 18251) (Lactobacillus fermentum)).